A 189-amino-acid polypeptide reads, in one-letter code: Protein GrpE (189 aa).

The interval 1-22 is disordered; that stretch reads MKEQQKETEQNIEEINDETVTE. The segment covering 10–22 has biased composition (acidic residues); the sequence is QNIEEINDETVTE.

The protein belongs to the GrpE family. In terms of assembly, homodimer.

It localises to the cytoplasm. In terms of biological role, participates actively in the response to hyperosmotic and heat shock by preventing the aggregation of stress-denatured proteins, in association with DnaK and GrpE. It is the nucleotide exchange factor for DnaK and may function as a thermosensor. Unfolded proteins bind initially to DnaJ; upon interaction with the DnaJ-bound protein, DnaK hydrolyzes its bound ATP, resulting in the formation of a stable complex. GrpE releases ADP from DnaK; ATP binding to DnaK triggers the release of the substrate protein, thus completing the reaction cycle. Several rounds of ATP-dependent interactions between DnaJ, DnaK and GrpE are required for fully efficient folding. In Leuconostoc citreum (strain KM20), this protein is Protein GrpE.